The chain runs to 178 residues: Probable chorismate pyruvate-lyase (178 aa).

The substrate site is built by Met-37, Arg-78, Leu-114, and Glu-165.

This sequence belongs to the UbiC family.

The protein localises to the cytoplasm. It carries out the reaction chorismate = 4-hydroxybenzoate + pyruvate. It participates in cofactor biosynthesis; ubiquinone biosynthesis. In terms of biological role, removes the pyruvyl group from chorismate, with concomitant aromatization of the ring, to provide 4-hydroxybenzoate (4HB) for the ubiquinone pathway. This chain is Probable chorismate pyruvate-lyase, found in Aeromonas hydrophila subsp. hydrophila (strain ATCC 7966 / DSM 30187 / BCRC 13018 / CCUG 14551 / JCM 1027 / KCTC 2358 / NCIMB 9240 / NCTC 8049).